We begin with the raw amino-acid sequence, 96 residues long: MHVTLVEINVHEDKVDEFIEVFRQNHLGSVQEEGNLRFDVLQDPEVNSRFYIYEAYKDEDAVAFHKTTPHYKTSVAKLESLMTGPRKKRLFNGLMP.

An ABM domain is found at 2–91 (HVTLVEINVH…MTGPRKKRLF (90 aa)).

The protein belongs to the LsrG family. In terms of assembly, homodimer.

Its subcellular location is the cytoplasm. The catalysed reaction is (2S)-2-hydroxy-3,4-dioxopentyl phosphate = 3-hydroxy-2,4-dioxopentyl phosphate. Its function is as follows. Involved in the degradation of phospho-AI-2, thereby terminating induction of the lsr operon and closing the AI-2 signaling cycle. Catalyzes the conversion of (4S)-4-hydroxy-5-phosphonooxypentane-2,3-dione (P-DPD) to 3-hydroxy-5-phosphonooxypentane-2,4-dione (P-HPD). The protein is (4S)-4-hydroxy-5-phosphonooxypentane-2,3-dione isomerase of Escherichia coli O9:H4 (strain HS).